Consider the following 240-residue polypeptide: Uridylate kinase (240 aa).

13 to 16 (KLSG) provides a ligand contact to ATP. The interval 21-26 (GDDGFG) is involved in allosteric activation by GTP. Glycine 55 contributes to the UMP binding site. Positions 56 and 60 each coordinate ATP. Residues aspartate 75 and 136 to 143 (IGNPYFST) contribute to the UMP site. ATP contacts are provided by asparagine 164, tyrosine 170, and aspartate 173.

This sequence belongs to the UMP kinase family. In terms of assembly, homohexamer.

Its subcellular location is the cytoplasm. It catalyses the reaction UMP + ATP = UDP + ADP. It participates in pyrimidine metabolism; CTP biosynthesis via de novo pathway; UDP from UMP (UMPK route): step 1/1. Allosterically activated by GTP. Inhibited by UTP. Functionally, catalyzes the reversible phosphorylation of UMP to UDP. This chain is Uridylate kinase, found in Staphylococcus saprophyticus subsp. saprophyticus (strain ATCC 15305 / DSM 20229 / NCIMB 8711 / NCTC 7292 / S-41).